We begin with the raw amino-acid sequence, 270 residues long: 4-hydroxy-tetrahydrodipicolinate reductase (270 aa).

Residues 8 to 13, Asp-34, 102 to 104, and 128 to 131 contribute to the NAD(+) site; these read GALGRM, GTT, and SQNY. The active-site Proton donor/acceptor is His-160. (S)-2,3,4,5-tetrahydrodipicolinate is bound at residue His-161. Catalysis depends on Lys-164, which acts as the Proton donor. 170-171 lines the (S)-2,3,4,5-tetrahydrodipicolinate pocket; the sequence is GT.

It belongs to the DapB family.

Its subcellular location is the cytoplasm. It carries out the reaction (S)-2,3,4,5-tetrahydrodipicolinate + NAD(+) + H2O = (2S,4S)-4-hydroxy-2,3,4,5-tetrahydrodipicolinate + NADH + H(+). The catalysed reaction is (S)-2,3,4,5-tetrahydrodipicolinate + NADP(+) + H2O = (2S,4S)-4-hydroxy-2,3,4,5-tetrahydrodipicolinate + NADPH + H(+). It functions in the pathway amino-acid biosynthesis; L-lysine biosynthesis via DAP pathway; (S)-tetrahydrodipicolinate from L-aspartate: step 4/4. Its function is as follows. Catalyzes the conversion of 4-hydroxy-tetrahydrodipicolinate (HTPA) to tetrahydrodipicolinate. The chain is 4-hydroxy-tetrahydrodipicolinate reductase from Methanococcus maripaludis (strain C7 / ATCC BAA-1331).